The following is a 538-amino-acid chain: Beta-1,4-mannosyl-glycoprotein 4-beta-N-acetylglucosaminyltransferase (538 aa).

The Cytoplasmic portion of the chain corresponds to 1–7; the sequence is MKMRRYK. The helical; Signal-anchor for type II membrane protein transmembrane segment at 8-23 threads the bilayer; the sequence is LFLMFCMAGLCLISFL. Residues 24 to 538 are Lumenal-facing; sequence HFFKTLSYVT…VRGKLDTAEG (515 aa). The tract at residues 120–161 is disordered; that stretch reads PGTRMLEKPSPGRTEEKTEVSEGSSARGPARRPMRHVLSSRE. Asn-245, Asn-263, and Asn-401 each carry an N-linked (GlcNAc...) asparagine glycan. A disordered region spans residues 507 to 538; that stretch reads REPKSTVEGGRQNQGSDGRSSAVRGKLDTAEG.

The protein belongs to the glycosyltransferase 17 family. Interacts with MGAT4D. As to expression, highly expressed in brain and kidney and to a much lesser extent in stomach, heart, intestine, uterus, testis, ovary and lung. Not present in spleen, liver and muscle. In brain, expressed in neurons of hippocampus.

It localises to the golgi apparatus membrane. The catalysed reaction is N(4)-{beta-D-GlcNAc-(1-&gt;2)-alpha-D-Man-(1-&gt;3)-[beta-D-GlcNAc-(1-&gt;2)-alpha-D-Man-(1-&gt;6)]-beta-D-Man-(1-&gt;4)-beta-D-GlcNAc-(1-&gt;4)-beta-D-GlcNAc}-L-asparaginyl-[protein] + UDP-N-acetyl-alpha-D-glucosamine = N(4)-{beta-D-GlcNAc-(1-&gt;2)-alpha-D-Man-(1-&gt;3)-[beta-D-GlcNAc-(1-&gt;4)]-[beta-D-GlcNAc-(1-&gt;2)-alpha-D-Man-(1-&gt;6)]-beta-D-Man-(1-&gt;4)-beta-D-GlcNAc-(1-&gt;4)-beta-D-GlcNAc}-L-asparaginyl-[protein] + UDP + H(+). Its pathway is protein modification; protein glycosylation. Functionally, it is involved in the regulation of the biosynthesis and biological function of glycoprotein oligosaccharides. Catalyzes the addition of N-acetylglucosamine in beta 1-4 linkage to the beta-linked mannose of the trimannosyl core of N-linked sugar chains, called bisecting N-acetylglucosamine (GlcNAc). It is one of the most important enzymes involved in the regulation of the biosynthesis of glycoprotein oligosaccharides. The addition of this bisecting GlcNAc residue alters not only the composition, but also the conformation of the N-glycan. The introduction of the bisecting GlcNAc residue results in the suppression of further processing and elongation of N-glycans, precluding the formation of beta-1,6 GlcNAc branching, catalyzed by MGAT5 since it is unable to use the bisected oligosaccharide as a substrate. Addition of bisecting N-acetylglucosamine to CDH1/E-cadherin modulates CDH1 cell membrane location. Inhibits NeuAc-alpha-2,3-Gal-beta-1,4-GlcNAc- formation which modulates sialylation levels and plays a role in cell migration regulation. In brain, addition of bisecting N-acetylglucosamine to BACE1 blocks its lysosomal targeting in response to oxidative stress and further degradation which increases its location to early endosome and the APP cleavage. The polypeptide is Beta-1,4-mannosyl-glycoprotein 4-beta-N-acetylglucosaminyltransferase (Mus musculus (Mouse)).